We begin with the raw amino-acid sequence, 247 residues long: Coproheme decarboxylase (247 aa).

Residues Arg129, 143 to 147 (YPMDK), His170, Gln183, and Ser221 each bind Fe-coproporphyrin III. The active site involves Tyr143.

It belongs to the ChdC family. Type 1 subfamily. The cofactor is Fe-coproporphyrin III.

It catalyses the reaction Fe-coproporphyrin III + 2 H2O2 + 2 H(+) = heme b + 2 CO2 + 4 H2O. The enzyme catalyses Fe-coproporphyrin III + H2O2 + H(+) = harderoheme III + CO2 + 2 H2O. It carries out the reaction harderoheme III + H2O2 + H(+) = heme b + CO2 + 2 H2O. It participates in porphyrin-containing compound metabolism; protoheme biosynthesis. Involved in coproporphyrin-dependent heme b biosynthesis. Catalyzes the decarboxylation of Fe-coproporphyrin III (coproheme) to heme b (protoheme IX), the last step of the pathway. The reaction occurs in a stepwise manner with a three-propionate intermediate. The polypeptide is Coproheme decarboxylase (Bacillus cereus (strain B4264)).